The following is a 123-amino-acid chain: Alpha-ketoglutarate dehydrogenase subunit 4, mitochondrial (123 aa).

The N-terminal 8 residues, 1-8, are a transit peptide targeting the mitochondrion; the sequence is MIATPIRL.

This sequence belongs to the alpha-ketoglutarate dehydrogenase component 4 family. In terms of assembly, component of the 2-oxoglutarate dehydrogenase complex (OGDC), also called alpha-ketoglutarate dehydrogenase (KGDH) complex. The copmplex is composed of the catalytic subunits OGDH (2-oxoglutarate dehydrogenase KGD1; also called E1 subunit), DLST (dihydrolipoamide succinyltransferase KGD2; also called E2 subunit) and DLD (dihydrolipoamide dehydrogenase LPD1; also called E3 subunit), and the assembly factor KGD4. Within OGDC, interacts (via N-terminus) with E3 subunit and (via C-terminus) with the complex core formed by E1 and E2 subunits.

It localises to the mitochondrion. Functionally, molecular adapter that is necessary to a form a stable 2-oxoglutarate dehydrogenase enzyme complex (OGDC). Required for incorporation of the E3 subunit (LPD1) into the E1-E2 core (KGD1-KGD2) of mitochondrial OGDC, and acting as a stability factor for the fully assembled complex. This chain is Alpha-ketoglutarate dehydrogenase subunit 4, mitochondrial, found in Saccharomyces cerevisiae (strain ATCC 204508 / S288c) (Baker's yeast).